The primary structure comprises 140 residues: Small ribosomal subunit protein uS12 (140 aa).

At Pro59 the chain carries Hydroxyproline.

It belongs to the universal ribosomal protein uS12 family.

The chain is Small ribosomal subunit protein uS12 (RPS23) from Encephalitozoon cuniculi (strain GB-M1) (Microsporidian parasite).